A 409-amino-acid chain; its full sequence is Peptidase T (409 aa).

Histidine 78 is a Zn(2+) binding site. Aspartate 80 is a catalytic residue. Aspartate 140 is a Zn(2+) binding site. Catalysis depends on glutamate 174, which acts as the Proton acceptor. Zn(2+) contacts are provided by glutamate 175, aspartate 197, and histidine 379.

It belongs to the peptidase M20B family. It depends on Zn(2+) as a cofactor.

The protein resides in the cytoplasm. It catalyses the reaction Release of the N-terminal residue from a tripeptide.. Cleaves the N-terminal amino acid of tripeptides. This chain is Peptidase T, found in Aliivibrio salmonicida (strain LFI1238) (Vibrio salmonicida (strain LFI1238)).